The primary structure comprises 346 residues: Biotin synthase (346 aa).

The Radical SAM core domain maps to 38–256 (RQVQVSTLLS…IAVARIMMPT (219 aa)). Cysteine 53, cysteine 57, and cysteine 60 together coordinate [4Fe-4S] cluster. Cysteine 97, cysteine 128, cysteine 188, and arginine 260 together coordinate [2Fe-2S] cluster.

It belongs to the radical SAM superfamily. Biotin synthase family. In terms of assembly, homodimer. [4Fe-4S] cluster serves as cofactor. The cofactor is [2Fe-2S] cluster.

The catalysed reaction is (4R,5S)-dethiobiotin + (sulfur carrier)-SH + 2 reduced [2Fe-2S]-[ferredoxin] + 2 S-adenosyl-L-methionine = (sulfur carrier)-H + biotin + 2 5'-deoxyadenosine + 2 L-methionine + 2 oxidized [2Fe-2S]-[ferredoxin]. Its pathway is cofactor biosynthesis; biotin biosynthesis; biotin from 7,8-diaminononanoate: step 2/2. Catalyzes the conversion of dethiobiotin (DTB) to biotin by the insertion of a sulfur atom into dethiobiotin via a radical-based mechanism. This is Biotin synthase from Shigella flexneri serotype 5b (strain 8401).